We begin with the raw amino-acid sequence, 251 residues long: Adenosylcobinamide-GDP ribazoletransferase (251 aa).

Transmembrane regions (helical) follow at residues 29-49 (FAGM…ILAV), 65-85 (SLLI…DGAM), 110-130 (AFGA…LCYL), 136-156 (LLIL…IVRY), 175-195 (AIDL…IARF), and 198-218 (LTVA…TGAW).

Belongs to the CobS family. It depends on Mg(2+) as a cofactor.

Its subcellular location is the cell inner membrane. The enzyme catalyses alpha-ribazole + adenosylcob(III)inamide-GDP = adenosylcob(III)alamin + GMP + H(+). It carries out the reaction alpha-ribazole 5'-phosphate + adenosylcob(III)inamide-GDP = adenosylcob(III)alamin 5'-phosphate + GMP + H(+). Its pathway is cofactor biosynthesis; adenosylcobalamin biosynthesis; adenosylcobalamin from cob(II)yrinate a,c-diamide: step 7/7. In terms of biological role, joins adenosylcobinamide-GDP and alpha-ribazole to generate adenosylcobalamin (Ado-cobalamin). Also synthesizes adenosylcobalamin 5'-phosphate from adenosylcobinamide-GDP and alpha-ribazole 5'-phosphate. This is Adenosylcobinamide-GDP ribazoletransferase from Synechococcus elongatus (strain ATCC 33912 / PCC 7942 / FACHB-805) (Anacystis nidulans R2).